We begin with the raw amino-acid sequence, 72 residues long: Translation initiation factor IF-1 (72 aa).

Residues 1–72 (MTKEEVLEFP…TKGRITYRFK (72 aa)) enclose the S1-like domain.

The protein belongs to the IF-1 family. In terms of assembly, component of the 30S ribosomal translation pre-initiation complex which assembles on the 30S ribosome in the order IF-2 and IF-3, IF-1 and N-formylmethionyl-tRNA(fMet); mRNA recruitment can occur at any time during PIC assembly.

It localises to the cytoplasm. Functionally, one of the essential components for the initiation of protein synthesis. Stabilizes the binding of IF-2 and IF-3 on the 30S subunit to which N-formylmethionyl-tRNA(fMet) subsequently binds. Helps modulate mRNA selection, yielding the 30S pre-initiation complex (PIC). Upon addition of the 50S ribosomal subunit IF-1, IF-2 and IF-3 are released leaving the mature 70S translation initiation complex. This Agrobacterium fabrum (strain C58 / ATCC 33970) (Agrobacterium tumefaciens (strain C58)) protein is Translation initiation factor IF-1.